The sequence spans 389 residues: Chalcone synthase (389 aa).

The active site involves C164.

Belongs to the thiolase-like superfamily. Chalcone/stilbene synthases family.

It catalyses the reaction (E)-4-coumaroyl-CoA + 3 malonyl-CoA + 3 H(+) = 2',4,4',6'-tetrahydroxychalcone + 3 CO2 + 4 CoA. Its pathway is secondary metabolite biosynthesis; flavonoid biosynthesis. Functionally, the primary product of this enzyme is 4,2',4',6'-tetrahydroxychalcone (also termed naringenin-chalcone or chalcone) which can under specific conditions spontaneously isomerize into naringenin. In Catharanthus roseus (Madagascar periwinkle), this protein is Chalcone synthase (CHS).